Reading from the N-terminus, the 553-residue chain is Transcription factor IIIB 70 kDa subunit (553 aa).

The TFIIB-type zinc-finger motif lies at 6–39; it reads KQQKCKTCGHTQFDVNRYTAAGDVSCLRCGTVLE. Zn(2+) is bound by residues C10, C13, C31, and C34. Tandem repeats lie at residues 98-174 and 193-272. The interaction with TBP and with the Pol III subunit C34 stretch occupies residues 98–272; it reads IAAALKIPDY…LQRRLNEFKK (175 aa). The tract at residues 281-553 is interaction with TBP; it reads KSFREVENLE…KGLLGGNMGF (273 aa). The disordered stretch occupies residues 473 to 523; that stretch reads KQEADELTGNTSKSSSGNRRKRNKSSLPAELRKELGDIDLDEDGTPRSAAD. Residues 480–489 show a composition bias toward low complexity; sequence TGNTSKSSSG.

This sequence belongs to the TFIIB family. In terms of assembly, TFIIIB comprises the TATA-binding protein (TBP), the B-related factor (BRF) and a 70 kDa polypeptide.

The protein localises to the nucleus. Functionally, general activator of RNA polymerase III transcription. Interacts with TBP. Binds to Pol III subunit C34 and to the TAU135 component of TFIIIC. The protein is Transcription factor IIIB 70 kDa subunit (TDS4) of Candida albicans (strain SC5314 / ATCC MYA-2876) (Yeast).